The sequence spans 1096 residues: MDDALHALSSLTAKKRTTTYKKVAVPILDENDNTNGNGPNDIDNPPELTGNGFLFANATLNRVKNRLEGKKAPEQNHNNGKDRSENSLPTQLISNLYDGGEELEKSEVKDNSYSEKNVSSSFTQTQRIPVSIQQDKVFNVPIHSVNDGKPTQLIKEDGLVNETSQALKTPLTTGRPGATQRIDSSGATSQTQPIKSIEPQSQIITTSSNHSNALSPKIPIIPTELIGTSPLFQSIQNRGPDTQMDVPPQTAHDEDKTQAIGIPQATHQEQKTQIDTVAQTLQDEVPHTLKIREIQSELASEDSKREKARNVEYKKPQKPIPTKKFFSKESFLADFDDSSSNEDDDIKLENAHPKPVQNDDELHENKSVELNLTDETRINEKRVPLLSSYANNLKREIDSSKCITLDLDSDSDEYGDDDMDSIKLSKDESVLPISQLSKATILNLKARLSKQNQKLSQRPNKSKDPKVDHNVLLNTLRKASRKQILDHQKEVIETKGLKLEDMAKEKEIVENLLEQEILRNKRIRQKEKRREKLEENDFQLNAHDSGSDSGSESSGFALSGNEIADYESSGSENDNRRESDSEKEDDEIILKQKKSHHVKHIINESDSDTEVEAKPKEKADESLPKRIAINLGHYGDNIGEDTDKFQETNVLDTQNIEEVMAERNTIENEVKDDVYVNEEADEAIRRQLIDKEKLQLKQKEKEHEAKIKELKKRGVTNFFEMEAEESEDEWHGIGGADGEGSDDYDSDLEKMIDDYSKNNFNPHEIREMLAAENKEMDIKMINKILYDIKNGGFRNKRAKNSLELELSDDDEDDVLQQYRLKRRELMRKRRLEIGDDAKLVKNPKSSAFFESMVEDIIEYKNPFGAEEEYNLDITSTATDLDTQDNSINVGDNTGNNEQKPVDQKNKKVIISEDFVQKSLSFLKSNNYEDFETDKELSRIQHGNDEAIEDLYTLKQNSSIKSFTNSQTDSTTSKTVNTIIDLEKRPEDEDEVENGDTSLVGVFKHPSIIKSFASRTDINDKFKEGNKTVKILKSYKTVGSSKASITYMGKTRKLIAPKRKTEGSHRYHHDHHNKKMKMKTKTKSNKLFESGQDSFDN.

Positions Glu-68 to Glu-85 are enriched in basic and acidic residues. A disordered region spans residues Glu-68–Thr-90. Ser-144 carries the phosphoserine modification. Disordered regions lie at residues Ala-166–Gln-200, Ile-294–Pro-316, and Asp-336–Asn-365. Residues Arg-181 to Gln-200 show a composition bias toward polar residues. Residues Ile-294 to Lys-315 are compositionally biased toward basic and acidic residues. Positions Asp-336–Ile-346 are enriched in acidic residues. Ser-409, Ser-411, and Ser-434 each carry phosphoserine. The stretch at Gln-488 to Ala-542 forms a coiled coil. The segment at Glu-527–Asp-620 is disordered. Residues Ser-547–Gly-560 show a composition bias toward low complexity. Positions Lys-591–His-600 are enriched in basic residues. Phosphoserine is present on residues Ser-605 and Ser-607. Thr-609 carries the post-translational modification Phosphothreonine. Residues Val-611–Asp-620 show a composition bias toward basic and acidic residues. A coiled-coil region spans residues Asp-652–Thr-716. The interval Glu-724–Asp-743 is disordered. Ser-801 and Ser-807 each carry phosphoserine. Residues Asp-881–Gln-898 show a composition bias toward polar residues. The tract at residues Asp-881 to Gln-903 is disordered. Phosphoserine is present on Ser-911. A disordered region spans residues Arg-1058–Asn-1096. The segment covering Arg-1065–Ser-1083 has biased composition (basic residues).

In terms of assembly, interacts with CDC45 in S phase. Phosphorylated by MEC1 and RAD53.

The protein resides in the nucleus. Required for normal DNA replication. Phosphorylated in response to DNA replication stress. Phosphorylation allows it to mediate the activation of RAD53. This Saccharomyces cerevisiae (strain ATCC 204508 / S288c) (Baker's yeast) protein is Mediator of replication checkpoint protein 1 (MRC1).